The primary structure comprises 262 residues: Cell division protein FtsQ (262 aa).

Residues 1-20 (MSWSDKRRHWRARKSQVNWY) are Cytoplasmic-facing. Residues 21 to 41 (LWSGIGFLSLVIGSFVFGGYL) form a helical membrane-spanning segment. Residues 42–262 (LHKFLNDAST…EPIINDEKPR (221 aa)) lie on the Periplasmic side of the membrane. In terms of domain architecture, POTRA spans 52 to 121 (LPIEAVAIKG…AKLRVYLQEQ (70 aa)).

This sequence belongs to the FtsQ/DivIB family. FtsQ subfamily. In terms of assembly, part of a complex composed of FtsB, FtsL and FtsQ.

Its subcellular location is the cell inner membrane. Its function is as follows. Essential cell division protein. May link together the upstream cell division proteins, which are predominantly cytoplasmic, with the downstream cell division proteins, which are predominantly periplasmic. May control correct divisome assembly. In Shewanella oneidensis (strain ATCC 700550 / JCM 31522 / CIP 106686 / LMG 19005 / NCIMB 14063 / MR-1), this protein is Cell division protein FtsQ.